A 1075-amino-acid chain; its full sequence is Nuclear factor of activated T-cells, cytoplasmic 3 (1075 aa).

At Thr-2 the chain carries N-acetylthreonine. Residues 18–37 are disordered; sequence FGEDGAPAPPPPGSRPADLE. Positions 109-114 are calcineurin-binding; that stretch reads PSIQIT. The disordered stretch occupies residues 205-306; that stretch reads LGSPLTSPGG…PGHSPRGSVT (102 aa). 2 consecutive repeat copies span residues 207-223 and 236-252. A 3 X SP repeats region spans residues 207–308; sequence SPLTSPGGSP…HSPRGSVTED (102 aa). A compositionally biased stretch (polar residues) spans 236–253; that stretch reads SPRQSPCHSPRSSVTDEN. A compositionally biased stretch (low complexity) spans 256–270; sequence SPRPASGPSSRPTSP. The short motif at 273–275 is the Nuclear localization signal element; sequence KRR. Copy 3 of the repeat occupies 292-308; that stretch reads SPVPSPGHSPRGSVTED. Phosphoserine occurs at positions 344 and 372. Residues 415 to 596 form the RHD domain; sequence SSLPPLDWPL…IPVECSQRSA (182 aa). A DNA-binding region spans residues 444–451; it reads RAHYETEG. Positions 686-688 match the Nuclear localization signal motif; it reads KRK. Disordered regions lie at residues 711 to 739 and 887 to 988; these read DLSS…SHDS and SNTG…GLSA. Polar residues-rich tracts occupy residues 724 to 739 and 887 to 912; these read AQTQ…SHDS and SNTG…QLQP. Low complexity-rich tracts occupy residues 916–939 and 949–967; these read GPSH…SSPL and PMPY…SPAT. Residues 970-981 are compositionally biased toward polar residues; it reads HSGQHSTQAQST. A Nuclear export signal motif is present at residues 1032-1041; the sequence is TLDDVNEIIG. The disordered stretch occupies residues 1049-1075; sequence VSQGAGVSRQAPLPSPESLDLGRSDGL. A phosphoserine mark is found at Ser-1063 and Ser-1066.

In terms of assembly, NFATC proteins bind to DNA as monomers. Member of the multicomponent NFATC transcription complex that consists of at least two components, a pre-existing cytoplasmic component NFATC2 and an inducible nuclear component NFATC1. Other members such as NFATC4, or members of the activating protein-1 family, MAF, GATA4 and Cbp/p300 can also bind the complex. Component of a promoter-binding complex composed of STAT3, NFATC3 and NFATC4; complex formation is enhanced by calcineurin. Interacts with TRIM17; this interaction prevents NFATC3 nuclear localization. Interacts with and ubiquitinated by STUB1/CHIP; HSPA1A/HSP70 is required as a co-chaperone. Ubiquitinated by STUB1/CHIP, leading to proteasomal degradation. Post-translationally, phosphorylated by NFATC-kinase; dephosphorylated by calcineurin. In terms of tissue distribution, predominantly expressed in thymus and is also found in peripheral blood leukocytes and kidney. Predominantly expressed in skeletal muscle. Also found weakly expressed in the thymus, kidney, testis, spleen, prostate, ovary, small intestine, heart, placenta and pancreas. As to expression, expressed in thymus and kidney. In terms of tissue distribution, expressed in thymus and skeletal muscle.

It is found in the cytoplasm. Its subcellular location is the nucleus. Acts as a regulator of transcriptional activation. Binds to the TNFSF11/RANKL promoter region and promotes TNFSF11 transcription. Binding to the TNFSF11 promoter region is increased by high levels of Ca(2+) which induce NFATC3 expression and may lead to regulation of TNFSF11 expression in osteoblasts. Plays a role in promoting mesenteric arterial wall remodeling in response to the intermittent hypoxia-induced increase in EDN1 and ROCK signaling. As a result NFATC3 colocalizes with F-actin filaments, translocates to the nucleus and promotes transcription of the smooth muscle hypertrophy and differentiation marker ACTA2. Promotes lipopolysaccharide-induced apoptosis and hypertrophy in cardiomyocytes. Following JAK/STAT signaling activation and as part of a complex with NFATC4 and STAT3, binds to the alpha-beta E4 promoter region of CRYAB and activates transcription in cardiomyocytes. In conjunction with NFATC4, involved in embryonic heart development via maintenance of cardiomyocyte survival, proliferation and differentiation. Plays a role in the inducible expression of cytokine genes in T-cells, especially in the induction of the IL-2. Required for thymocyte maturation during DN3 to DN4 transition and during positive selection. Positively regulates macrophage-derived polymicrobial clearance, via binding to the promoter region and promoting transcription of NOS2 resulting in subsequent generation of nitric oxide. Involved in Ca(2+)-mediated transcriptional responses upon Ca(2+) influx via ORAI1 CRAC channels. The polypeptide is Nuclear factor of activated T-cells, cytoplasmic 3 (Homo sapiens (Human)).